The following is a 293-amino-acid chain: MYKDIATPGRTKEILERYGFSFKKSLGQNFLIDANILRKIVDVADISPDTGAIEIGPGIGALTEQLARRAKKVVAFEIDGRLLPILADTLSPYDNVRIFHQDVLKADLHAVIAEELADVSDRMVVANLPYYVTTPIIMKLLTERLPIRGMVVMLQKEVADRLAAKPGTKDYGSLTIAVQYYTEAEVIMTVPRTVFMPQPNVDSAVIRLVKRQHPPVVVDDEGVFFQVVRASFAQRRKTLFNNLTNNLPGGKENKEQIERVLVALGIDPRRRGETLDIAEFASLSNALAPLFGK.

Positions 29, 31, 56, 77, 102, and 127 each coordinate S-adenosyl-L-methionine.

This sequence belongs to the class I-like SAM-binding methyltransferase superfamily. rRNA adenine N(6)-methyltransferase family. RsmA subfamily.

The protein localises to the cytoplasm. It catalyses the reaction adenosine(1518)/adenosine(1519) in 16S rRNA + 4 S-adenosyl-L-methionine = N(6)-dimethyladenosine(1518)/N(6)-dimethyladenosine(1519) in 16S rRNA + 4 S-adenosyl-L-homocysteine + 4 H(+). Its function is as follows. Specifically dimethylates two adjacent adenosines (A1518 and A1519) in the loop of a conserved hairpin near the 3'-end of 16S rRNA in the 30S particle. May play a critical role in biogenesis of 30S subunits. This chain is Ribosomal RNA small subunit methyltransferase A, found in Geobacillus kaustophilus (strain HTA426).